The primary structure comprises 153 residues: Superoxide dismutase [Cu-Zn] (153 aa).

Cu cation is bound by residues His-45, His-47, and His-62. Cys-56 and Cys-145 are joined by a disulfide. His-62, His-70, His-79, and Asp-82 together coordinate Zn(2+). His-119 serves as a coordination point for Cu cation.

The protein belongs to the Cu-Zn superoxide dismutase family. In terms of assembly, homodimer. Cu cation serves as cofactor. Requires Zn(2+) as cofactor.

The protein localises to the cytoplasm. It carries out the reaction 2 superoxide + 2 H(+) = H2O2 + O2. In terms of biological role, destroys radicals which are normally produced within the cells and which are toxic to biological systems. In Drosophila teissieri (Fruit fly), this protein is Superoxide dismutase [Cu-Zn].